The following is a 135-amino-acid chain: Cytochrome b5 (135 aa).

The region spanning 4 to 80 is the Cytochrome b5 heme-binding domain; that stretch reads SKVYSLAEVS…MDEMCVGDID (77 aa). Positions 39 and 63 each coordinate heme. The helical transmembrane segment at 106-126 threads the bilayer; it reads FIIKLLQFLVPLIILGVAVGI.

It belongs to the cytochrome b5 family.

Its subcellular location is the endoplasmic reticulum membrane. It is found in the microsome membrane. Membrane bound hemoprotein which function as an electron carrier for several membrane bound oxygenases. This is Cytochrome b5 from Cuscuta reflexa (Southern Asian dodder).